Reading from the N-terminus, the 92-residue chain is MSRSLSKGPYIAAHLLKKLNNVDIQKPDVVIKTWSRSSTILPNMVGATIAVYNGKQHVPVYISDQMVGHKLGEFSPTRTFRSHIKSDKKAKR.

Belongs to the universal ribosomal protein uS19 family.

Its subcellular location is the plastid. The protein resides in the chloroplast. Its function is as follows. Protein S19 forms a complex with S13 that binds strongly to the 16S ribosomal RNA. This is Small ribosomal subunit protein uS19c (rps19) from Guillardia theta (Cryptophyte).